Consider the following 101-residue polypeptide: Small ribosomal subunit protein bS6 (101 aa).

This sequence belongs to the bacterial ribosomal protein bS6 family.

Its function is as follows. Binds together with bS18 to 16S ribosomal RNA. In Paenarthrobacter aurescens (strain TC1), this protein is Small ribosomal subunit protein bS6.